The following is a 383-amino-acid chain: Insulinoma-associated protein 1a (383 aa).

Residues 1–20 (MPRGFLVKRNKKATPVSYRV) form an SNAG domain region. 2 disordered regions span residues 99–141 (PVDL…AMRK) and 229–269 (RWHK…SEDG). Positions 105–120 (GTSNSNRTGTTVTTKR) are enriched in polar residues. Over residues 130–140 (KPASKKAKAMR) the composition is skewed to basic residues. The segment at 209 to 231 (YRCPECDKLFSCPANLASHRRWH) adopts a C2H2-type 1 zinc-finger fold. The span at 244 to 256 (APEKEETSSDRDT) shows a compositional bias: basic and acidic residues. Residues 271 to 295 (YDCQHCGKKFKRQAYLKKHVTAHHD) form a C2H2-type 2; degenerate zinc finger. 2 C2H2-type zinc fingers span residues 314-337 (HLCPVCGENFPSRMSQERHIRLQH) and 342-365 (YPCKYCPAMFYSSPGLTRHINKCH).

Belongs to the INSM1 family.

It is found in the nucleus. Functionally, may act as a transcriptional regulator. May play a role in neurogenesis and neuroendocrine cell differentiation during embryonic development. This is Insulinoma-associated protein 1a (insm1a) from Danio rerio (Zebrafish).